Reading from the N-terminus, the 1091-residue chain is ATP-dependent RNA helicase ddx54 (1091 aa).

2 disordered regions span residues 1–63 (MVKP…KEEF) and 150–231 (DNSN…KTGG). Over residues 26-35 (MKGKKLETKS) the composition is skewed to basic and acidic residues. Residues 150–161 (DNSNFDNNGDQF) show a composition bias toward polar residues. Basic and acidic residues predominate over residues 196–207 (KKEEIESSEKFE). The short motif at 230–258 (GGFQSMDLTKNLLKAILKKGFNVPTPIQR) is the Q motif element. Positions 261–433 (IPMILDGHDI…RAGLNNPKLI (173 aa)) constitute a Helicase ATP-binding domain. 274–281 (ARTGSGKT) contacts ATP. The DEAD box signature appears at 381–384 (DEAD). One can recognise a Helicase C-terminal domain in the interval 478–632 (TETTTTTTTN…KFQYEGQTIN (155 aa)). Disordered stretches follow at residues 801–896 (EEML…TPEN) and 933–1091 (KRKG…KSRK). The span at 814-823 (DNNKDIKMNE) shows a compositional bias: basic and acidic residues. Positions 824–855 (NDDENDDDDEEGENDDDEEEENEKDEDDEEDE) are enriched in acidic residues. 3 stretches are compositionally biased toward basic and acidic residues: residues 865–874 (ESSDKNDNNK), 944–975 (DADRKNSKKLVRNEAGKLVEAKKSHKGYEEWK), and 1008–1019 (QGREKEKKDNKA). Over residues 1020-1029 (SHAKGSHGLK) the composition is skewed to basic residues. The segment covering 1031-1052 (RPSELKDKNQISKNRSEKERKM) has biased composition (basic and acidic residues). Positions 1068–1079 (SGGGGGGKGSKF) are enriched in gly residues.

This sequence belongs to the DEAD box helicase family. DDX54/DBP10 subfamily.

The protein localises to the nucleus. Its subcellular location is the nucleolus. The catalysed reaction is ATP + H2O = ADP + phosphate + H(+). Its function is as follows. ATP-binding RNA helicase which may be involved in the ribosome biogenesis. This chain is ATP-dependent RNA helicase ddx54 (helA), found in Dictyostelium discoideum (Social amoeba).